The chain runs to 140 residues: ATP synthase epsilon chain (140 aa).

The protein belongs to the ATPase epsilon chain family. As to quaternary structure, F-type ATPases have 2 components, CF(1) - the catalytic core - and CF(0) - the membrane proton channel. CF(1) has five subunits: alpha(3), beta(3), gamma(1), delta(1), epsilon(1). CF(0) has three main subunits: a, b and c.

The protein localises to the cell inner membrane. Its function is as follows. Produces ATP from ADP in the presence of a proton gradient across the membrane. In Legionella pneumophila (strain Lens), this protein is ATP synthase epsilon chain.